The primary structure comprises 247 residues: tRNA pseudouridine synthase A (247 aa).

The active-site Nucleophile is the D53. Residue Y112 participates in substrate binding.

It belongs to the tRNA pseudouridine synthase TruA family. Homodimer.

It catalyses the reaction uridine(38/39/40) in tRNA = pseudouridine(38/39/40) in tRNA. Formation of pseudouridine at positions 38, 39 and 40 in the anticodon stem and loop of transfer RNAs. This Anaplasma marginale (strain St. Maries) protein is tRNA pseudouridine synthase A.